The chain runs to 489 residues: Betaine aldehyde dehydrogenase (489 aa).

K(+) is bound by residues Thr-26 and Asp-93. 150-152 (GAW) is an NAD(+) binding site. The Charge relay system role is filled by Lys-162. Residue 176–179 (KPSE) participates in NAD(+) binding. Val-180 contacts K(+). NAD(+) is bound at residue 229 to 232 (GVET). Position 245 (Leu-245) interacts with K(+). Residue Glu-251 is the Proton acceptor of the active site. NAD(+) is bound by residues Gly-253, Cys-285, and Glu-386. Residue Cys-285 is the Nucleophile of the active site. Cys-285 carries the post-translational modification Cysteine sulfenic acid (-SOH). The K(+) site is built by Lys-456 and Gly-459. The active-site Charge relay system is Glu-463.

Belongs to the aldehyde dehydrogenase family. In terms of assembly, dimer of dimers. The cofactor is K(+).

It catalyses the reaction betaine aldehyde + NAD(+) + H2O = glycine betaine + NADH + 2 H(+). It functions in the pathway amine and polyamine biosynthesis; betaine biosynthesis via choline pathway; betaine from betaine aldehyde: step 1/1. Involved in the biosynthesis of the osmoprotectant glycine betaine. Catalyzes the irreversible oxidation of betaine aldehyde to the corresponding acid. In Burkholderia pseudomallei (strain K96243), this protein is Betaine aldehyde dehydrogenase.